The following is a 156-amino-acid chain: Small ribosomal subunit protein uS7 (156 aa).

The protein belongs to the universal ribosomal protein uS7 family. As to quaternary structure, part of the 30S ribosomal subunit. Contacts proteins S9 and S11.

Its function is as follows. One of the primary rRNA binding proteins, it binds directly to 16S rRNA where it nucleates assembly of the head domain of the 30S subunit. Is located at the subunit interface close to the decoding center, probably blocks exit of the E-site tRNA. In Sphingopyxis alaskensis (strain DSM 13593 / LMG 18877 / RB2256) (Sphingomonas alaskensis), this protein is Small ribosomal subunit protein uS7.